Consider the following 296-residue polypeptide: Acetylglutamate kinase (296 aa).

Substrate contacts are provided by residues 66–67, arginine 88, and asparagine 191; that span reads GG.

It belongs to the acetylglutamate kinase family. ArgB subfamily.

The protein localises to the cytoplasm. The enzyme catalyses N-acetyl-L-glutamate + ATP = N-acetyl-L-glutamyl 5-phosphate + ADP. Its pathway is amino-acid biosynthesis; L-arginine biosynthesis; N(2)-acetyl-L-ornithine from L-glutamate: step 2/4. Its function is as follows. Catalyzes the ATP-dependent phosphorylation of N-acetyl-L-glutamate. The sequence is that of Acetylglutamate kinase from Lawsonia intracellularis (strain PHE/MN1-00).